We begin with the raw amino-acid sequence, 457 residues long: tRNA modification GTPase MnmE (457 aa).

Residues Arg-24, Glu-81, and Lys-121 each coordinate (6S)-5-formyl-5,6,7,8-tetrahydrofolate. The region spanning 218–380 (GIKIVITGKP…LLKYLTKIIS (163 aa)) is the TrmE-type G domain. Asn-228 is a K(+) binding site. Residues 228–233 (NVGKSS), 247–253 (TNIAGTT), 272–275 (DTAG), and 338–341 (NKAD) each bind GTP. Position 232 (Ser-232) interacts with Mg(2+). Positions 247, 249, and 252 each coordinate K(+). A Mg(2+)-binding site is contributed by Thr-253. Lys-457 lines the (6S)-5-formyl-5,6,7,8-tetrahydrofolate pocket.

This sequence belongs to the TRAFAC class TrmE-Era-EngA-EngB-Septin-like GTPase superfamily. TrmE GTPase family. In terms of assembly, homodimer. Heterotetramer of two MnmE and two MnmG subunits. The cofactor is K(+).

Its subcellular location is the cytoplasm. Its function is as follows. Exhibits a very high intrinsic GTPase hydrolysis rate. Involved in the addition of a carboxymethylaminomethyl (cmnm) group at the wobble position (U34) of certain tRNAs, forming tRNA-cmnm(5)s(2)U34. The chain is tRNA modification GTPase MnmE from Baumannia cicadellinicola subsp. Homalodisca coagulata.